The following is a 327-amino-acid chain: Probable cell division protein WhiA (327 aa).

Residues 275-308 (SLEELGRLADPPMTKDAVAGRIRRLLSMADRKAK) constitute a DNA-binding region (H-T-H motif).

The protein belongs to the WhiA family.

In terms of biological role, involved in cell division and chromosome segregation. The chain is Probable cell division protein WhiA from Mycobacterium marinum (strain ATCC BAA-535 / M).